The sequence spans 43 residues: uncharacterized protein (43 aa).

It belongs to the ELIP/psbS family.

The protein resides in the plastid. Its subcellular location is the chloroplast. Functionally, possible role in chlorophyll and/or carotenoid binding. This is an uncharacterized protein from Cyanidium caldarium (Red alga).